Here is an 874-residue protein sequence, read N- to C-terminus: Ribosome biogenesis protein ERB1 (874 aa).

Residues 1–148 (MAKKEVSASK…DAFAAADAAT (148 aa)) are disordered. A compositionally biased stretch (basic and acidic residues) spans 27–41 (QAVEKEEAEKEKEEG). Acidic residues predominate over residues 55–77 (PESDSDDEGAAAAEEEEEEEEQQ). The span at 78–89 (QDVKELDLDKGE) shows a compositional bias: basic and acidic residues. Composition is skewed to acidic residues over residues 95–104 (SDAEDFDSEE) and 128–139 (PKEDGDEQDEQD). The required for interaction with NOP7 stretch occupies residues 312–429 (RFVPSKHEAK…LRLVPGYQDS (118 aa)). The interval 429 to 465 (SVRERFERSLDLYLAPRLRKNKLNIDPESLIPELPSP) is required for interaction with YTM1. WD repeat units follow at residues 481–520 (GHTG…QVFK) and 529–569 (NGED…FEIE). Positions 593–602 (KVKGEDTKGD) are enriched in basic and acidic residues. Residues 593–640 (KVKGEDTKGDLDDDEEEEEEEEDDDDDEGQGKVKAHNSTAPAKKDVAK) form a disordered region. Acidic residues predominate over residues 603 to 620 (LDDDEEEEEEEEDDDDDE). 5 WD repeats span residues 658 to 700 (QCRR…SQSP), 703 to 741 (KSKG…LLKK), 744 to 783 (PGVR…TPYK), 787 to 827 (YHEK…DLMT), and 843 to 874 (INQI…LWTT).

This sequence belongs to the WD repeat BOP1/ERB1 family. In terms of assembly, component of the NOP7 complex, composed of ERB1, NOP7 and YTM1. The complex is held together by ERB1, which interacts with NOP7 via its N-terminal domain and with YTM1 via a high-affinity interaction between the seven-bladed beta-propeller domains of the 2 proteins. The NOP7 complex associates with the 66S pre-ribosome.

The protein resides in the nucleus. Its subcellular location is the nucleolus. It is found in the nucleoplasm. In terms of biological role, component of the NOP7 complex, which is required for maturation of the 25S and 5.8S ribosomal RNAs and formation of the 60S ribosome. The sequence is that of Ribosome biogenesis protein ERB1 from Lodderomyces elongisporus (strain ATCC 11503 / CBS 2605 / JCM 1781 / NBRC 1676 / NRRL YB-4239) (Yeast).